The sequence spans 64 residues: Alpha-conotoxin CnIC (64 aa).

Residues 1-21 (MGMRMMFTVFLLVVLTTTVVS) form the signal peptide. Positions 22 to 47 (FPSDSASDVRDDEAKDERSDMYKSKR) are excised as a propeptide. At Asn48 the chain carries Deamidated asparagine; in CnIH; partial. 2 cysteine pairs are disulfide-bonded: Cys51–Cys56 and Cys52–Cys62. Residue Cys62 is modified to Cysteine amide.

It belongs to the conotoxin A superfamily. As to expression, expressed by the venom duct.

Its subcellular location is the secreted. Its function is as follows. Alpha-conotoxins act on postsynaptic membranes, they bind to the nicotinic acetylcholine receptors (nAChR) and thus inhibit them. This chain is Alpha-conotoxin CnIC, found in Conus consors (Singed cone).